A 110-amino-acid polypeptide reads, in one-letter code: Large ribosomal subunit protein uL22 (110 aa).

The protein belongs to the universal ribosomal protein uL22 family. In terms of assembly, part of the 50S ribosomal subunit.

In terms of biological role, this protein binds specifically to 23S rRNA; its binding is stimulated by other ribosomal proteins, e.g. L4, L17, and L20. It is important during the early stages of 50S assembly. It makes multiple contacts with different domains of the 23S rRNA in the assembled 50S subunit and ribosome. Functionally, the globular domain of the protein is located near the polypeptide exit tunnel on the outside of the subunit, while an extended beta-hairpin is found that lines the wall of the exit tunnel in the center of the 70S ribosome. The polypeptide is Large ribosomal subunit protein uL22 (Mycoplasmopsis pulmonis (strain UAB CTIP) (Mycoplasma pulmonis)).